We begin with the raw amino-acid sequence, 568 residues long: UPF0313 protein FN0734 (568 aa).

The Radical SAM core domain occupies 289 to 562 (ALDTIKYSVT…KQKQKDIVTE (274 aa)). [4Fe-4S] cluster-binding residues include Cys303, Cys307, and Cys310. The disordered stretch occupies residues 546–568 (VEKDNGKKQKQKDIVTEKRKNRK).

The protein belongs to the UPF0313 family. It depends on [4Fe-4S] cluster as a cofactor.

This chain is UPF0313 protein FN0734, found in Fusobacterium nucleatum subsp. nucleatum (strain ATCC 25586 / DSM 15643 / BCRC 10681 / CIP 101130 / JCM 8532 / KCTC 2640 / LMG 13131 / VPI 4355).